The chain runs to 449 residues: Tubulin alpha chain (449 aa).

Gln-11, Glu-71, Ser-140, Gly-144, Thr-145, Thr-179, Asn-206, and Asn-228 together coordinate GTP. A Mg(2+)-binding site is contributed by Glu-71. Glu-254 is an active-site residue.

The protein belongs to the tubulin family. As to quaternary structure, dimer of alpha and beta chains. A typical microtubule is a hollow water-filled tube with an outer diameter of 25 nm and an inner diameter of 15 nM. Alpha-beta heterodimers associate head-to-tail to form protofilaments running lengthwise along the microtubule wall with the beta-tubulin subunit facing the microtubule plus end conferring a structural polarity. Microtubules usually have 13 protofilaments but different protofilament numbers can be found in some organisms and specialized cells. It depends on Mg(2+) as a cofactor.

It is found in the cytoplasm. Its subcellular location is the cytoskeleton. The catalysed reaction is GTP + H2O = GDP + phosphate + H(+). Functionally, tubulin is the major constituent of microtubules, a cylinder consisting of laterally associated linear protofilaments composed of alpha- and beta-tubulin heterodimers. Microtubules grow by the addition of GTP-tubulin dimers to the microtubule end, where a stabilizing cap forms. Below the cap, tubulin dimers are in GDP-bound state, owing to GTPase activity of alpha-tubulin. The protein is Tubulin alpha chain (TUB1) of Pneumocystis carinii.